Reading from the N-terminus, the 144-residue chain is MESPLGSDLARLVRIWRALIDHRLKPLELTQTHWVTLHNIHQLPPDQSQIQLAKAIGIEQPSLVRTLDQLEDKGLISRQTCASDRRAKRIKLTEKAEPLIAEMEEVIHKTRGEILAGISSEEIELLIKLVAKLEHNIMELHSHD.

The HTH marR-type domain maps to 2 to 135 (ESPLGSDLAR…LIKLVAKLEH (134 aa)). The H-T-H motif DNA-binding region spans 49 to 72 (QIQLAKAIGIEQPSLVRTLDQLED).

The protein belongs to the SlyA family. As to quaternary structure, homodimer.

Transcription regulator that can specifically activate or repress expression of target genes. Required to activate expression of virulent genes. The chain is Transcriptional regulator SlyA from Salmonella choleraesuis (strain SC-B67).